The sequence spans 264 residues: Apolipoprotein A-I (264 aa).

An N-terminal signal peptide occupies residues 1-18 (MKAVVLAVALVFLTGSQA). 2 consecutive repeat copies span residues 67–88 (LNLLENWDTLGTTVGQLQERLG) and 89–110 (PLTRDFWDNLEKETDWLRQEMN). Residues 67 to 264 (LNLLENWDTL…DKARETLTAQ (198 aa)) are 10 X approximate tandem repeats. Residue Met109 is modified to Methionine sulfoxide. A 3; half-length repeat occupies 111–121 (KDLEEVKQNVQ). 3 tandem repeats follow at residues 122–143 (PYLDEFQKKWNEDVELYRQRVA), 144–165 (PLGAELHESARQKLQELQGKLS), and 166–187 (PVAEEFRDRMRTHVDALRTQLA). A 7; truncated repeat occupies 188 to 207 (PHSDKLRESLAQRLAELKSN). Residues 208–229 (PTLNEYHTRAKTHLNTFGEKAR) form repeat 8. The stretch at 230–240 (PALEDLRHTLI) is one 9; half-length repeat. Repeat unit 10 spans residues 241 to 264 (PILDTLKTKVKSVIDKARETLTAQ).

The protein belongs to the apolipoprotein A1/A4/E family. In terms of assembly, homodimer. Interacts with APOA1BP and CLU. Component of a sperm activating protein complex (SPAP), consisting of APOA1, an immunoglobulin heavy chain, an immunoglobulin light chain and albumin. Interacts with NDRG1. Interacts with SCGB3A2. Interacts with NAXE and YJEFN3. In terms of processing, glycosylated. Post-translationally, palmitoylated. Phosphorylation sites are present in the extracellular medium.

It is found in the secreted. Participates in the reverse transport of cholesterol from tissues to the liver for excretion by promoting cholesterol efflux from tissues and by acting as a cofactor for the lecithin cholesterol acyltransferase (LCAT). As part of the SPAP complex, activates spermatozoa motility. The chain is Apolipoprotein A-I (Apoa1) from Mus pahari (Gairdner's shrew-mouse).